The primary structure comprises 265 residues: uncharacterized protein (265 aa).

Residues His-7, His-9, Glu-95, His-131, His-156, and Asp-206 each contribute to the a divalent metal cation site.

Belongs to the metallo-dependent hydrolases superfamily. TatD-type hydrolase family. A divalent metal cation is required as a cofactor.

This is an uncharacterized protein from Buchnera aphidicola subsp. Baizongia pistaciae (strain Bp).